Here is a 254-residue protein sequence, read N- to C-terminus: Thiazole synthase (254 aa).

Lys95 acts as the Schiff-base intermediate with DXP in catalysis. Residues Gly156, 182 to 183 (AG), and 204 to 205 (NT) contribute to the 1-deoxy-D-xylulose 5-phosphate site.

This sequence belongs to the ThiG family. Homotetramer. Forms heterodimers with either ThiH or ThiS.

The protein localises to the cytoplasm. It carries out the reaction [ThiS sulfur-carrier protein]-C-terminal-Gly-aminoethanethioate + 2-iminoacetate + 1-deoxy-D-xylulose 5-phosphate = [ThiS sulfur-carrier protein]-C-terminal Gly-Gly + 2-[(2R,5Z)-2-carboxy-4-methylthiazol-5(2H)-ylidene]ethyl phosphate + 2 H2O + H(+). It functions in the pathway cofactor biosynthesis; thiamine diphosphate biosynthesis. Catalyzes the rearrangement of 1-deoxy-D-xylulose 5-phosphate (DXP) to produce the thiazole phosphate moiety of thiamine. Sulfur is provided by the thiocarboxylate moiety of the carrier protein ThiS. In vitro, sulfur can be provided by H(2)S. The chain is Thiazole synthase from Shewanella piezotolerans (strain WP3 / JCM 13877).